Reading from the N-terminus, the 346-residue chain is NADH-ubiquinone oxidoreductase chain 2 (346 aa).

The next 11 helical transmembrane spans lie at 1-21, 26-46, 60-80, 96-116, 122-142, 151-171, 178-198, 199-219, 242-262, 274-294, and 320-340; these read MSPY…MLIS, WVFM…ILVW, FIVQ…SLSG, MMIM…YWVV, LNYI…LAVL, SSML…GGLG, LLAF…VAGS, LLGL…FSIL, VLLG…GFFG, LLLG…FYYL, and LSGL…LVGG.

This sequence belongs to the complex I subunit 2 family.

The protein resides in the mitochondrion inner membrane. The catalysed reaction is a ubiquinone + NADH + 5 H(+)(in) = a ubiquinol + NAD(+) + 4 H(+)(out). Its function is as follows. Core subunit of the mitochondrial membrane respiratory chain NADH dehydrogenase (Complex I) that is believed to belong to the minimal assembly required for catalysis. Complex I functions in the transfer of electrons from NADH to the respiratory chain. The immediate electron acceptor for the enzyme is believed to be ubiquinone. This Branchiostoma lanceolatum (Common lancelet) protein is NADH-ubiquinone oxidoreductase chain 2 (ND2).